Consider the following 955-residue polypeptide: Probable trehalose monomycolate exporter MmpL3 (955 aa).

Topologically, residues 1-13 are cytoplasmic; the sequence is MFAWWGRTVYRYR. A helical transmembrane segment spans residues 14–34; it reads FIVIGITVALCLCGGVFGLSL. Residues 35–190 are Periplasmic-facing; it reads GKHVTQSGFY…TIATDQRRME (156 aa). Residue 40–44 coordinates a 1,2-diacylglycero-3-phosphoethanolamine; sequence QSGFY. The helical transmembrane segment at 191–213 threads the bilayer; the sequence is VLALPLVAVVLFLVFGGVIAACL. At 214–219 the chain is on the cytoplasmic side; that stretch reads PVMVGG. The helical transmembrane segment at 220–236 threads the bilayer; that stretch reads LSIAGALGILRFIALFG. Topologically, residues 237–244 are periplasmic; it reads PVHFFAQP. Residues 245-262 traverse the membrane as a helical segment; that stretch reads VVSLIGLGIAVDYGLFVV. Topologically, residues 263–291 are cytoplasmic; the sequence is SRFREEIAEGYDTEAAVRRTVMTAGRTVT. The helical transmembrane segment at 292 to 312 threads the bilayer; sequence FSAVLIAASGASLLLLPQGFV. The Periplasmic segment spans residues 313-319; sequence KSLTYAL. The helical transmembrane segment at 320–340 threads the bilayer; it reads IAAVTLAALLSITLLPACLAI. The Cytoplasmic portion of the chain corresponds to 341-401; that stretch reads LAKHVDALGV…KLVNFVMKRP (61 aa). Residues 402-422 form a helical membrane-spanning segment; that stretch reads LVFAIPIVIGMILLVIPLGNL. Over 423–567 the chain is Periplasmic; that stretch reads SFGGMSEKYL…HSLVAQAPLM (145 aa). Residues 568 to 588 traverse the membrane as a helical segment; the sequence is VIMLITTTMLLMFLAFGSFVL. The Cytoplasmic portion of the chain corresponds to 589–591; that stretch reads PIK. Residues 592 to 612 form a helical membrane-spanning segment; the sequence is AAVMSALTLGSTMGILTWIFV. At 613-621 the chain is on the periplasmic side; it reads DGHLSKWLN. The chain crosses the membrane as a helical span at residues 622 to 642; sequence FTPTPLMVVIIALVVAVGYGL. Topologically, residues 643 to 678 are cytoplasmic; that stretch reads ATDYEVFLVSRMVEARAESMSTQEAVRIGTASTGRL. A helical membrane pass occupies residues 679 to 699; it reads ITAAALVLAVVAGSFVFSDLV. Over 700 to 703 the chain is Periplasmic; that stretch reads MMKY. A helical transmembrane segment spans residues 704-724; that stretch reads LAFGLMAALLLDATVVRMFLV. Residues 725–955 are Cytoplasmic-facing; that stretch reads PSVMKLLGDD…QDLLRREGRL (231 aa). The disordered stretch occupies residues 759 to 955; the sequence is ERRRPTVSGR…QDLLRREGRL (197 aa). Polar residues-rich tracts occupy residues 821–860 and 890–902; these read GAST…SQGV and NRSS…TAEP.

It belongs to the resistance-nodulation-cell division (RND) (TC 2.A.6) family. MmpL subfamily.

The protein localises to the cell inner membrane. It is found in the cell septum. Its subcellular location is the cell tip. Functionally, transports trehalose monomycolate (TMM) to the cell wall. Flips TMM across the inner membrane. Membrane potential is not required for this function. Transports probably phosphatidylethanolamine (PE) as well. Contributes to membrane potential, cell wall composition, antibiotic susceptibility and fitness. The chain is Probable trehalose monomycolate exporter MmpL3 (mmpL3) from Mycobacterium leprae (strain TN).